An 89-amino-acid polypeptide reads, in one-letter code: Small ribosomal subunit protein uS17 (89 aa).

This sequence belongs to the universal ribosomal protein uS17 family. As to quaternary structure, part of the 30S ribosomal subunit.

Functionally, one of the primary rRNA binding proteins, it binds specifically to the 5'-end of 16S ribosomal RNA. In Chlorobium chlorochromatii (strain CaD3), this protein is Small ribosomal subunit protein uS17.